A 227-amino-acid chain; its full sequence is Potassium/proton antiporter CemA (227 aa).

A run of 4 helical transmembrane segments spans residues 5-25 (SISLLYLISIVFLPWCISFTF), 112-132 (IICFFILSGYSILGNQELILI), 143-163 (LSDTIKAFSILLLTDLCIGFH), and 187-207 (IISGLVSTFPVILDTIFKYWI).

It belongs to the CemA family.

The protein localises to the plastid. It is found in the chloroplast inner membrane. It catalyses the reaction K(+)(in) + H(+)(out) = K(+)(out) + H(+)(in). Functionally, contributes to K(+)/H(+) antiport activity by supporting proton efflux to control proton extrusion and homeostasis in chloroplasts in a light-dependent manner to modulate photosynthesis. Prevents excessive induction of non-photochemical quenching (NPQ) under continuous-light conditions. Indirectly promotes efficient inorganic carbon uptake into chloroplasts. This is Potassium/proton antiporter CemA from Phaseolus vulgaris (Kidney bean).